We begin with the raw amino-acid sequence, 605 residues long: Zinc metalloproteinase nas-34 (605 aa).

An N-terminal signal peptide occupies residues 1-19 (MVSYWPVLIVLCLLPICHA). Positions 20–124 (KSYFADFVNG…EFLYAIRGKR (105 aa)) are excised as a propeptide. A Peptidase M12A domain is found at 124-322 (RSMTSFLSER…VKRINFAYCN (199 aa)). 2 cysteine pairs are disulfide-bonded: C165-C321 and C191-C211. Position 219 (H219) interacts with Zn(2+). The active site involves E220. Residues H223 and H229 each coordinate Zn(2+). The EGF-like domain maps to 317–357 (NFAYCNSTCSNYLDCQNGGYINPNDCNNCKCPPGFGGQLCD). N322 is a glycosylation site (N-linked (GlcNAc...) asparagine). Intrachain disulfides connect C325–C345, C347–C356, C366–C388, and C415–C436. One can recognise a CUB domain in the interval 366 to 469 (CGAGDITATS…ARFSLNYRYD (104 aa)). The tract at residues 479–526 (TTTSTTTTTAPITVPTVSPTTTTTRQTTTTARTSTTTTTTQAPPTTTT) is disordered. The region spanning 525-566 (TTSTSQCASWSACSAQCGGCGTQSRRCGTYVETVYCNTNPCT) is the TSP type-1 domain. 3 cysteine pairs are disulfide-bonded: C531-C551, C537-C560, and C541-C565.

It depends on Zn(2+) as a cofactor. Expressed in hypodermal cells. First expressed in the dorsal and lateral surface area of the middle and posterior region of embryos. At later stages, it localizes to lateral surface regions, probably corresponding to hypodermal seam cells. In L1 larvae, it is expressed in seam cells and in a few cells anterior to the nerve ring.

The protein localises to the secreted. Its function is as follows. Metalloprotease. Required for normal hatching and migration of neuroblasts. May act by degrading eggshell proteins at hatching. This is Zinc metalloproteinase nas-34 (hch-1) from Caenorhabditis elegans.